We begin with the raw amino-acid sequence, 119 residues long: MKPRAVALVAGGGFAGALCRHGIAVVLPGTFPWGTLVVNVAGAFLLGAIVYGTERLRSVPESTRLVVATGFLSSFTTYSTFAGETIALAPRLAALNVVGNYALGFVAVLVAREVIRWRS.

Helical transmembrane passes span 6–26 (VALV…IAVV), 31–51 (FPWG…AIVY), 66–86 (VVAT…GETI), and 91–111 (RLAA…VLVA).

It belongs to the fluoride channel Fluc/FEX (TC 1.A.43) family.

Its subcellular location is the cell membrane. It carries out the reaction fluoride(in) = fluoride(out). Its function is as follows. Fluoride-specific ion channel. Important for reducing fluoride concentration in the cell, thus reducing its toxicity. This Natronomonas pharaonis (strain ATCC 35678 / DSM 2160 / CIP 103997 / JCM 8858 / NBRC 14720 / NCIMB 2260 / Gabara) (Halobacterium pharaonis) protein is Fluoride-specific ion channel FluC 1.